Consider the following 421-residue polypeptide: F-box only protein 9 (421 aa).

The segment at 1–63 (MAESNQNTDG…AELRRRQETA (63 aa)) is disordered. Residues 11–20 (AVEEGEDENT) are compositionally biased toward acidic residues. Over residues 40-52 (LQPSSGGQRSFSR) the composition is skewed to polar residues. Residues 54-63 (AELRRRQETA) show a composition bias toward basic and acidic residues. The TPR repeat unit spans residues 68–101 (ARELFLKAVEEEQNGAVYEAIKYYKSAMQLVPDI). The F-box domain occupies 158-209 (QVHISALPFEVLMYIFRWVVSCDLDLRALEQLSLVCRGFYICARDPEIWRSA).

In terms of assembly, part of the SCF (SKP1-CUL1-F-box) E3 ubiquitin-protein ligase complex SCF(fbxo9).

It localises to the cytoplasm. It participates in protein modification; protein ubiquitination. Functionally, substrate recognition component of a SCF (SKP1-CUL1-F-box protein) E3 ubiquitin-protein ligase complex which mediates the ubiquitination and subsequent proteasomal degradation of target proteins and acts as a regulator of mTOR signaling. In Danio rerio (Zebrafish), this protein is F-box only protein 9 (fbxo9).